Reading from the N-terminus, the 420-residue chain is Exodeoxyribonuclease 7 large subunit (420 aa).

Belongs to the XseA family. In terms of assembly, heterooligomer composed of large and small subunits.

It localises to the cytoplasm. The catalysed reaction is Exonucleolytic cleavage in either 5'- to 3'- or 3'- to 5'-direction to yield nucleoside 5'-phosphates.. Bidirectionally degrades single-stranded DNA into large acid-insoluble oligonucleotides, which are then degraded further into small acid-soluble oligonucleotides. This is Exodeoxyribonuclease 7 large subunit from Helicobacter acinonychis (strain Sheeba).